Reading from the N-terminus, the 1836-residue chain is Druantia protein DruE (1836 aa).

Residues 108–405 (SFLGEDASDL…FAQDLTGLSP (298 aa)) form the Helicase ATP-binding domain. 121–128 (TGTGSGKT) is an ATP binding site. Residues 347-350 (DEAH) carry the DEAH box motif. In terms of domain architecture, Helicase C-terminal spans 1014–1199 (DCTALMPFAL…EVKVNNPKIA (186 aa)).

It is found in the cytoplasm. Functionally, component of antiviral defense system Druantia type I, composed of DruA, DruB, DruC, DruD and DruE. Expression of Druantia in E.coli (strain MG1655) confers resistance to phage lambda, SECphi18, SECphi27 and T4. This protein is probably a helicase. The chain is Druantia protein DruE from Escherichia coli (strain UMEA 4076-1).